Consider the following 144-residue polypeptide: Large ribosomal subunit protein uL11 (144 aa).

It belongs to the universal ribosomal protein uL11 family. Part of the ribosomal stalk of the 50S ribosomal subunit. Interacts with L10 and the large rRNA to form the base of the stalk. L10 forms an elongated spine to which L12 dimers bind in a sequential fashion forming a multimeric L10(L12)X complex. One or more lysine residues are methylated.

Its function is as follows. Forms part of the ribosomal stalk which helps the ribosome interact with GTP-bound translation factors. In Legionella pneumophila (strain Paris), this protein is Large ribosomal subunit protein uL11.